A 176-amino-acid polypeptide reads, in one-letter code: Large ribosomal subunit protein uL10 (176 aa).

It belongs to the universal ribosomal protein uL10 family. Part of the ribosomal stalk of the 50S ribosomal subunit. The N-terminus interacts with L11 and the large rRNA to form the base of the stalk. The C-terminus forms an elongated spine to which L12 dimers bind in a sequential fashion forming a multimeric L10(L12)X complex.

Its function is as follows. Forms part of the ribosomal stalk, playing a central role in the interaction of the ribosome with GTP-bound translation factors. The protein is Large ribosomal subunit protein uL10 of Alcanivorax borkumensis (strain ATCC 700651 / DSM 11573 / NCIMB 13689 / SK2).